The chain runs to 150 residues: Transmembrane protein 35B (150 aa).

Residues 1–21 (MSFRVGVLRVLLGVFFALTGA) form the signal peptide. Helical transmembrane passes span 62 to 82 (TAVG…PPVL), 84 to 104 (EISN…LVVL), and 111 to 131 (YVPA…HFLA).

Belongs to the DoxX family.

It is found in the membrane. This Mus musculus (Mouse) protein is Transmembrane protein 35B.